Consider the following 366-residue polypeptide: Glycerol-3-phosphate dehydrogenase [NAD(+)], glycosomal (366 aa).

Residues 22 to 27 (GSGAFG), phenylalanine 97, lysine 125, and alanine 157 each bind NAD(+). Lysine 125 is a binding site for substrate. The active-site Proton acceptor is the lysine 210. NAD(+) contacts are provided by arginine 274, valine 298, and glutamate 300. 274 to 275 (RN) is a substrate binding site. The Microbody targeting signal signature appears at 364-366 (SKL).

It belongs to the NAD-dependent glycerol-3-phosphate dehydrogenase family. As to quaternary structure, homodimer.

The protein localises to the glycosome. The enzyme catalyses sn-glycerol 3-phosphate + NAD(+) = dihydroxyacetone phosphate + NADH + H(+). This Leishmania mexicana protein is Glycerol-3-phosphate dehydrogenase [NAD(+)], glycosomal (GPD).